The following is a 360-amino-acid chain: DNA polymerase IV (360 aa).

The UmuC domain occupies 8-191; it reads VLHVDMDSFF…LPVGRIPGIG (184 aa). Positions 12 and 110 each coordinate Mg(2+). The active site involves Glu111.

The protein belongs to the DNA polymerase type-Y family. In terms of assembly, monomer. It depends on Mg(2+) as a cofactor.

It localises to the cytoplasm. The enzyme catalyses DNA(n) + a 2'-deoxyribonucleoside 5'-triphosphate = DNA(n+1) + diphosphate. Its function is as follows. Poorly processive, error-prone DNA polymerase involved in untargeted mutagenesis. Copies undamaged DNA at stalled replication forks, which arise in vivo from mismatched or misaligned primer ends. These misaligned primers can be extended by PolIV. Exhibits no 3'-5' exonuclease (proofreading) activity. May be involved in translesional synthesis. The chain is DNA polymerase IV from Methanoculleus marisnigri (strain ATCC 35101 / DSM 1498 / JR1).